Consider the following 194-residue polypeptide: Putative L,D-transpeptidase YciB (194 aa).

Residues 1–19 (MKLSLFIIAVLMPVILLSA) form the signal peptide. Residue Cys-20 is the site of N-palmitoyl cysteine attachment. Cys-20 carries S-diacylglycerol cysteine lipidation. The L,D-TPase catalytic domain maps to 68-194 (VWIDVNVKEQ…IPEHTKVVIS (127 aa)). His-144 acts as the Proton donor/acceptor in catalysis. Catalysis depends on Cys-170, which acts as the Nucleophile.

This sequence belongs to the YkuD family.

It is found in the cell membrane. It functions in the pathway cell wall biogenesis; peptidoglycan biosynthesis. In Bacillus subtilis (strain 168), this protein is Putative L,D-transpeptidase YciB (yciB).